The primary structure comprises 413 residues: MDHLKRQDEKVFAAIEAELGRQRSKIELIASENFVSEAVMEAQGSVLTNKYAEGYPGKRYYGGCEHVDVVEDIARDRVKEIFGAEHVNVQPHSGAQANMAVYFTILEQGDTVLGMNLSHGGHLTHGSPVNFSGVQYNFVEYGVDAESHCINYDDVLAKAKEHKPKLIVAGASAYPRVIDFKRFREIADEVGAYLMVDMAHIAGLVAAGLHPNPVPHAHFVTTTTHKTLRGPRGGMILCEEQFAKQIDKSIFPGIQGGPLMHVIAAKAVAFGEALQDDFKTYAQNIINNANRLAEGLQKEGLTLVSGGTDNHLILIDVRNLEITGKVAEHVLDEVGITVNKNTIPFETASPFVTSGVRIGTAAVTSRGFGLEDMDEIASLIAYTLKNHENEAALEEARKRVEALTSKFPMYTDL.

(6S)-5,6,7,8-tetrahydrofolate contacts are provided by residues Leu117 and 121 to 123 (GHL). Residue Lys226 is modified to N6-(pyridoxal phosphate)lysine. (6S)-5,6,7,8-tetrahydrofolate contacts are provided by residues Glu239 and 349–351 (SPF).

This sequence belongs to the SHMT family. In terms of assembly, homodimer. The cofactor is pyridoxal 5'-phosphate.

It is found in the cytoplasm. The catalysed reaction is (6R)-5,10-methylene-5,6,7,8-tetrahydrofolate + glycine + H2O = (6S)-5,6,7,8-tetrahydrofolate + L-serine. The protein operates within one-carbon metabolism; tetrahydrofolate interconversion. It functions in the pathway amino-acid biosynthesis; glycine biosynthesis; glycine from L-serine: step 1/1. Functionally, catalyzes the reversible interconversion of serine and glycine with tetrahydrofolate (THF) serving as the one-carbon carrier. This reaction serves as the major source of one-carbon groups required for the biosynthesis of purines, thymidylate, methionine, and other important biomolecules. Also exhibits THF-independent aldolase activity toward beta-hydroxyamino acids, producing glycine and aldehydes, via a retro-aldol mechanism. This chain is Serine hydroxymethyltransferase, found in Bacillus anthracis (strain A0248).